A 510-amino-acid polypeptide reads, in one-letter code: GTPase Der (510 aa).

2 EngA-type G domains span residues proline 3–leucine 166 and isoleucine 220–threonine 393. Residues glycine 9 to serine 16, aspartate 56 to isoleucine 60, asparagine 118 to aspartate 121, glycine 226 to serine 233, aspartate 273 to valine 277, and asparagine 338 to aspartate 341 each bind GTP. Residues glutamine 394–asparagine 478 form the KH-like domain.

This sequence belongs to the TRAFAC class TrmE-Era-EngA-EngB-Septin-like GTPase superfamily. EngA (Der) GTPase family. As to quaternary structure, associates with the 50S ribosomal subunit.

In terms of biological role, GTPase that plays an essential role in the late steps of ribosome biogenesis. The polypeptide is GTPase Der (Haemophilus ducreyi (strain 35000HP / ATCC 700724)).